The primary structure comprises 1001 residues: Translation initiation factor IF-2 (1001 aa).

Positions K34 to E404 are disordered. Positions S67 to Q80 are enriched in basic and acidic residues. Pro residues-rich tracts occupy residues P98 to P107, P147 to P157, and P163 to P172. Residues A173–A190 show a composition bias toward low complexity. Composition is skewed to basic and acidic residues over residues S212–V230 and P238–P252. The segment covering D332–G342 has biased composition (acidic residues). Low complexity-rich tracts occupy residues K362–P371 and A385–R394. The segment covering S395 to E404 has biased composition (basic and acidic residues). Positions R493–V666 constitute a tr-type G domain. Positions G502–T509 are G1. G502 to T509 serves as a coordination point for GTP. The tract at residues G527–H531 is G2. A G3 region spans residues D552 to G555. GTP is bound by residues D552–H556 and N606–D609. The segment at N606–D609 is G4. Residues S642–L644 are G5.

This sequence belongs to the TRAFAC class translation factor GTPase superfamily. Classic translation factor GTPase family. IF-2 subfamily.

Its subcellular location is the cytoplasm. One of the essential components for the initiation of protein synthesis. Protects formylmethionyl-tRNA from spontaneous hydrolysis and promotes its binding to the 30S ribosomal subunits. Also involved in the hydrolysis of GTP during the formation of the 70S ribosomal complex. This is Translation initiation factor IF-2 (infB) from Synechocystis sp. (strain ATCC 27184 / PCC 6803 / Kazusa).